Reading from the N-terminus, the 158-residue chain is Cyclic pyranopterin monophosphate synthase (158 aa).

Substrate contacts are provided by residues 76-78 (LCH) and 114-115 (ME). Asp-129 is an active-site residue.

The protein belongs to the MoaC family. In terms of assembly, homohexamer; trimer of dimers.

The enzyme catalyses (8S)-3',8-cyclo-7,8-dihydroguanosine 5'-triphosphate = cyclic pyranopterin phosphate + diphosphate. It participates in cofactor biosynthesis; molybdopterin biosynthesis. In terms of biological role, catalyzes the conversion of (8S)-3',8-cyclo-7,8-dihydroguanosine 5'-triphosphate to cyclic pyranopterin monophosphate (cPMP). The sequence is that of Cyclic pyranopterin monophosphate synthase from Shewanella baltica (strain OS155 / ATCC BAA-1091).